A 328-amino-acid polypeptide reads, in one-letter code: Cytochrome c biogenesis protein CcsA (328 aa).

A run of 8 helical transmembrane segments spans residues 13-33, 46-66, 73-93, 101-121, 146-166, 234-254, 263-283, and 295-315; these read ISFSVVSIVLTIYFLTLLVNL, GIIITFFGITGLLFTRWIYSG, LYESLIFLSWAFSIIHMVSYF, LNAITAPSAIFIQGFATSGLL, MILGYGALLCGSLLSIALLVI, IISLGFIFLTVGILSGAVWAN, WDPKETWAFITWTIFAIYLHI, and AIVASIGFLLIWICYFGVILL.

Belongs to the CcmF/CycK/Ccl1/NrfE/CcsA family. As to quaternary structure, may interact with Ccs1.

Its subcellular location is the plastid. It is found in the chloroplast thylakoid membrane. Required during biogenesis of c-type cytochromes (cytochrome c6 and cytochrome f) at the step of heme attachment. This chain is Cytochrome c biogenesis protein CcsA, found in Crucihimalaya wallichii (Rock-cress).